A 284-amino-acid polypeptide reads, in one-letter code: Pseudouridine-5'-phosphate glycosidase (284 aa).

Glu17 (proton donor) is an active-site residue. Substrate contacts are provided by Lys77 and Val97. Asp126 contacts Mn(2+). 128–130 (SQD) provides a ligand contact to substrate. Residue Lys147 is the Nucleophile of the active site.

The protein belongs to the pseudouridine-5'-phosphate glycosidase family. In terms of assembly, homotrimer. The cofactor is Mn(2+).

The enzyme catalyses D-ribose 5-phosphate + uracil = psi-UMP + H2O. In terms of biological role, catalyzes the reversible cleavage of pseudouridine 5'-phosphate (PsiMP) to ribose 5-phosphate and uracil. Functions biologically in the cleavage direction, as part of a pseudouridine degradation pathway. The polypeptide is Pseudouridine-5'-phosphate glycosidase (Thermotoga petrophila (strain ATCC BAA-488 / DSM 13995 / JCM 10881 / RKU-1)).